We begin with the raw amino-acid sequence, 1093 residues long: MGTGDFICISMTGGAPWGFRLQGGKEQKQPLQVAKIRNQSKASGSGLCEGDEVVSINGNPCADLTYPEVIKLMESITDSLQMLIKRPSSGISEALISENENKNLEHLTHGGYVESTTLQIRPATKTQCTEFFLAPVKTEVPLAENQRSGPDCAGSLKEETGPSYQRAPQMPDSQRGRVAEELILREKVEAVQPGPVVELQLSLSQERHKGASGPLVALPGAEKSKSPDPDPNLSHDRIVHINSIPTNEKADPFLRSSKIIQISSGRELRVIQESEAGDAGLPRVEVILDCSDRQKTEGCRLQAGKECVDSPVEGGQSEAPPSLVSFAVSSEGTEQGEDPRSEKDHSRPHKHRARHARLRRSESLSEKQVKEAKSKCKSIALLLTDAPNPNSKGVLMFKKRRRRARKYTLVSYGTGELEREADEEEEGDKEDTCEVAFLGASESEVDEELLSDVDDNTQVVNFDWDSGLVDIEKKLNRGDKMEMLPDTTGKGALMFAKRRERMDQITAQKEEDKVGGTPSREQDAAQTDGLRTTTSYQRKEEESVRTQSSVSKSYIEVSHGLGHVPQQNGFSGTSETANIQRMVPMNRTAKPFPGSVNQPATPFSPTRNMTSPIADFPAPPPYSAVTPPPDAFSRGVSSPIAGPAQPPPWPQPAPWSQPAFYDSSERIASRDERISVPAKRTGILQEAKRRSTTKPMFTFKEPKVSPNPELLSLLQNSEGKRGTGAGGDSGPEEDYLSLGAEACNFMQSSSAKQKTPPPVAPKPAVKSSSSQPVTPVSPVWSPGVAPTQPPAFPTSNPSKGTVVSSIKIAQPSYPPARPASTLNVAGPFKGPQAAVASQNYTPKPTVSTPTVNAVQPGAVGPSNELPGMSGRGAQLFAKRQSRMEKYVVDSDTVQAHAARAQSPTPSLPASWKYSSNVRAPPPVAYNPIHSPSYPLAALKSQPSAAQPSKMGKKKGKKPLNALDVMKHQPYQLNASLFTFQPPDAKDGLPQKSSVKVNSALAMKQALPPRPVNAASPTNVQASSVYSVPAYTSPPSFFAEASSPVSASPVPVGIPTSPKQESASSSYFVAPRPKFSAKKSGVTIQVWKPSVVEE.

Residues 1–180 (MGTGDFICIS…PDSQRGRVAE (180 aa)) are interaction with VPS18. The PDZ domain maps to 6–88 (FICISMTGGA…SLQMLIKRPS (83 aa)). Disordered stretches follow at residues 144–174 (ENQRSGPDCAGSLKEETGPSYQRAPQMPDSQ) and 211–233 (ASGPLVALPGAEKSKSPDPDPNL). The span at 222 to 233 (EKSKSPDPDPNL) shows a compositional bias: basic and acidic residues. Serine 274, serine 310, serine 329, and serine 330 each carry phosphoserine. The disordered stretch occupies residues 329–369 (SSEGTEQGEDPRSEKDHSRPHKHRARHARLRRSESLSEKQV). Threonine 333 is subject to Phosphothreonine. Residues 346–358 (SRPHKHRARHARL) are compositionally biased toward basic residues. The span at 359 to 369 (RRSESLSEKQV) shows a compositional bias: basic and acidic residues. The short motif at 398-406 (KKRRRRARK) is the Nuclear localization signal element. 3 interaction with ACTN2 regions span residues 481 to 663 (MEML…FYDS), 664 to 924 (SERI…PPVA), and 901 to 1093 (QSPT…VVEE). 2 disordered regions span residues 507–803 (AQKE…GTVV) and 834–870 (AVASQNYTPKPTVSTPTVNAVQPGAVGPSNELPGMSG). F-actin binding stretches follow at residues 534 to 663 (TSYQ…FYDS) and 664 to 803 (SERI…GTVV). 3 positions are modified to phosphoserine: serine 548, serine 549, and serine 551. Composition is skewed to polar residues over residues 565–579 (PQQNGFSGTSETANI) and 595–611 (SVNQPATPFSPTRNMTS). Phosphoserine is present on serine 604. An interaction with YWHAB region spans residues 607-811 (RNMTSPIADF…VVSSIKIAQP (205 aa)). The residue at position 610 (threonine 610) is a Phosphothreonine. Serine 611 carries the phosphoserine modification. The segment at 615–626 (DFPAPPPYSAVT) is interaction with BAG3. Composition is skewed to pro residues over residues 617–630 (PAPPPYSAVTPPPD) and 644–655 (AQPPPWPQPAPW). The short motif at 619-622 (PPPY) is the PPPY motif element. At tyrosine 622 the chain carries Phosphotyrosine. Position 626 is a phosphothreonine (threonine 626). Residues 663 to 674 (SSERIASRDERI) show a composition bias toward basic and acidic residues. An F-actin bundling activity region spans residues 664 to 916 (SERIASRDER…LPASWKYSSN (253 aa)). Phosphoserine is present on residues serine 705 and serine 729. The interval 751–900 (AKQKTPPPVA…DTVQAHAARA (150 aa)) is actin binding. Phosphothreonine occurs at positions 755 and 774. Positions 762-784 (KPAVKSSSSQPVTPVSPVWSPGV) are enriched in low complexity. Residues serine 777 and serine 781 each carry the phosphoserine modification. Polar residues-rich tracts occupy residues 793 to 803 (PTSNPSKGTVV) and 835 to 853 (VASQNYTPKPTVSTPTVNA). An interaction with FLNC region spans residues 810-1093 (QPSYPPARPA…QVWKPSVVEE (284 aa)). Phosphoserine is present on residues serine 902, serine 906, and serine 910. Residues 937-956 (ALKSQPSAAQPSKMGKKKGK) form a disordered region. The interaction with ZYX stretch occupies residues 1000 to 1019 (LAMKQALPPRPVNAASPTNV). Serine 1015 carries the post-translational modification Phosphoserine. A compositionally biased stretch (low complexity) spans 1041 to 1050 (SSPVSASPVP). Residues 1041–1064 (SSPVSASPVPVGIPTSPKQESASS) are disordered. Position 1056 is a phosphoserine (serine 1056).

Belongs to the synaptopodin family. May self-associate in muscle cells under oxidative stress. Binds F-actin. Interacts with ACTN2; ACTN2 is proposed to anchor SYOP2 at Z lines in mature myocytes. Interacts with AKAP6, PPP3CA and CAMK2A. Interacts (phosphorylated form) with YWHAB; YWHAB competes with ACTN2 for interaction with SYNPO2. Interacts with KPNA2; mediating nuclear import of SYNOP2; dependent on interaction with YWHAB. Interacts with IPO13; may be implicated in SYNOP2 nuclear import. Interacts with ZYX, FLNC, ILK. Interacts with BAG3 (via WW 1 domain). May associate with the CASA complex consisting of HSPA8, HSPB8 and BAG3. Interacts with VPS18. Phosphorylated by PKA, and by CaMK2 at multiple sites. Dephosphorylated by calcineurin; abrogating interaction with YWHAB and impairing nuclear import. Phosphorylated by ILK. As to expression, expressed in heart muscle. Isoform 5 is specifically expressed in skeletal muscle.

The protein resides in the nucleus. Its subcellular location is the cytoplasm. It is found in the cytoskeleton. The protein localises to the myofibril. It localises to the sarcomere. The protein resides in the z line. Its subcellular location is the cell junction. It is found in the focal adhesion. Has an actin-binding and actin-bundling activity. Can induce the formation of F-actin networks in an isoform-specific manner. At the sarcomeric Z lines is proposed to act as adapter protein that links nascent myofibers to the sarcolemma via ZYX and may play a role in early assembly and stabilization of the Z lines. Involved in autophagosome formation. May play a role in chaperone-assisted selective autophagy (CASA) involved in Z lines maintenance in striated muscle under mechanical tension; may link the client-processing CASA chaperone machinery to a membrane-tethering and fusion complex providing autophagosome membranes. Involved in regulation of cell migration. May be a tumor suppressor. Its function is as follows. Involved in regulation of cell migration. Can induce formation of thick, irregular actin bundles in the cell body. In terms of biological role, involved in regulation of cell migration. Can induce long, well-organized actin bundles frequently orientated in parallel along the long axis of the cell showing characteristics of contractile ventral stress fibers. Functionally, involved in regulation of cell migration. Can induce an amorphous actin meshwork throughout the cell body containing a mixture of long and short, randomly organized thick and thin actin bundles. Can induce long, well-organized actin bundles frequently orientated in parallel along the long axis of the cell showing characteristics of contractile ventral stress fibers. Its function is as follows. Involved in regulation of cell migration in part dependent on the Rho-ROCK cascade; can promote formation of nascent focal adhesions, actin bundles at the leading cell edge and lamellipodia. Can induce formation of thick, irregular actin bundles in the cell body; the induced actin network is associated with enhanced cell migration in vitro. This is Synaptopodin-2 (SYNPO2) from Homo sapiens (Human).